A 597-amino-acid polypeptide reads, in one-letter code: Elongation factor 4 (597 aa).

The region spanning 2 to 184 (QHIRNFSIIA…TIVARVPAPQ (183 aa)) is the tr-type G domain. GTP is bound by residues 14-19 (DHGKST) and 131-134 (NKMD).

It belongs to the TRAFAC class translation factor GTPase superfamily. Classic translation factor GTPase family. LepA subfamily.

The protein localises to the cell inner membrane. The catalysed reaction is GTP + H2O = GDP + phosphate + H(+). Required for accurate and efficient protein synthesis under certain stress conditions. May act as a fidelity factor of the translation reaction, by catalyzing a one-codon backward translocation of tRNAs on improperly translocated ribosomes. Back-translocation proceeds from a post-translocation (POST) complex to a pre-translocation (PRE) complex, thus giving elongation factor G a second chance to translocate the tRNAs correctly. Binds to ribosomes in a GTP-dependent manner. The polypeptide is Elongation factor 4 (Bordetella petrii (strain ATCC BAA-461 / DSM 12804 / CCUG 43448)).